The sequence spans 368 residues: Cyclic GMP-AMP synthase-like receptor (368 aa).

Residues serine 60 and 72 to 74 contribute to the ATP site; that span reads EYD. Mg(2+)-binding residues include glutamate 72, aspartate 74, and aspartate 190. Residues aspartate 190 and 229–236 each bind GTP; that span reads RASFYRQE. ATP-binding positions include 233–236, lysine 254, and 268–272; these read YRQE and SYFIK.

This sequence belongs to the mab-21 family. Mg(2+) is required as a cofactor. It depends on Mn(2+) as a cofactor.

It catalyses the reaction GTP + ATP = 3',2'-cGAMP + 2 diphosphate. It carries out the reaction GTP + ATP = pppA(2'-5')pG + diphosphate. The catalysed reaction is pppA(2'-5')pG = 3',2'-cGAMP + diphosphate. With respect to regulation, the enzyme activity is specifically activated by double-stranded RNA (dsRNA). Its function is as follows. Nucleotidyltransferase that catalyzes the formation of cyclic GMP-AMP (3',2'-cGAMP) from ATP and GTP and plays a key role in innate immunity. Synthesizes 3',2'-cGAMP in a two-step reaction through production of the linear intermediate pppA(2'-5')pG. Acts as a key sensor of double-stranded RNA (dsRNA), the presence of dsRNA in the cytoplasm being a danger signal that triggers the immune responses. Directly binds dsRNA, activating the nucleotidyltransferase activity, leading to synthesis of 3',2'-cGAMP, a second messenger that binds to and activates Sting, thereby triggering the antiviral immune response via activation of the NF-kappa-B transcription factor Rel (Relish). This is Cyclic GMP-AMP synthase-like receptor from Lucilia cuprina (Green bottle fly).